The chain runs to 432 residues: Ribosomal protein uS12 methylthiotransferase RimO (432 aa).

One can recognise an MTTase N-terminal domain in the interval 4-122 (NKVDIITLGC…LISDLGKSYH (119 aa)). [4Fe-4S] cluster-binding residues include Cys13, Cys51, Cys85, Cys146, Cys150, and Cys153. The 232-residue stretch at 132–363 (TTPRHYAYVK…MRVQEGISAD (232 aa)) folds into the Radical SAM core domain. In terms of domain architecture, TRAM spans 366 to 432 (ASKVGQTFRV…AFDLYGKVLN (67 aa)).

The protein belongs to the methylthiotransferase family. RimO subfamily. It depends on [4Fe-4S] cluster as a cofactor.

It localises to the cytoplasm. It catalyses the reaction L-aspartate(89)-[ribosomal protein uS12]-hydrogen + (sulfur carrier)-SH + AH2 + 2 S-adenosyl-L-methionine = 3-methylsulfanyl-L-aspartate(89)-[ribosomal protein uS12]-hydrogen + (sulfur carrier)-H + 5'-deoxyadenosine + L-methionine + A + S-adenosyl-L-homocysteine + 2 H(+). Functionally, catalyzes the methylthiolation of an aspartic acid residue of ribosomal protein uS12. The sequence is that of Ribosomal protein uS12 methylthiotransferase RimO from Parabacteroides distasonis (strain ATCC 8503 / DSM 20701 / CIP 104284 / JCM 5825 / NCTC 11152).